A 371-amino-acid polypeptide reads, in one-letter code: Flagellar P-ring protein (371 aa).

An N-terminal signal peptide occupies residues 1–24; sequence MSIRVLLFSIFTGFLLAAAGPALA. Over residues 301–321 the composition is skewed to polar residues; that stretch reads PQPFSSGTTATQPQTDISAQK. Positions 301–322 are disordered; it reads PQPFSSGTTATQPQTDISAQKT.

The protein belongs to the FlgI family. As to quaternary structure, the basal body constitutes a major portion of the flagellar organelle and consists of four rings (L,P,S, and M) mounted on a central rod.

The protein resides in the periplasm. The protein localises to the bacterial flagellum basal body. Assembles around the rod to form the L-ring and probably protects the motor/basal body from shearing forces during rotation. This Allorhizobium ampelinum (strain ATCC BAA-846 / DSM 112012 / S4) (Agrobacterium vitis (strain S4)) protein is Flagellar P-ring protein.